The following is a 123-amino-acid chain: Small ribosomal subunit protein uS12c (123 aa).

It belongs to the universal ribosomal protein uS12 family. In terms of assembly, part of the 30S ribosomal subunit.

It is found in the plastid. Its subcellular location is the chloroplast. With S4 and S5 plays an important role in translational accuracy. Located at the interface of the 30S and 50S subunits. In Physcomitrium patens (Spreading-leaved earth moss), this protein is Small ribosomal subunit protein uS12c (rps12).